The primary structure comprises 307 residues: Alpha N-terminal protein methyltransferase 1 (307 aa).

Low complexity predominate over residues 38–54 (EPAPAPAAGSNGVAGEQ). Positions 38–60 (EPAPAPAAGSNGVAGEQEAGGGG) are disordered. S-adenosyl-L-methionine is bound by residues Gly-123, Arg-128, 145-147 (EPV), 179-180 (LQ), and Gln-195.

It belongs to the methyltransferase superfamily. NTM1 family.

It catalyses the reaction N-terminal L-alanyl-L-prolyl-L-lysyl-[protein] + 3 S-adenosyl-L-methionine = N-terminal N,N,N-trimethyl-L-alanyl-L-prolyl-L-lysyl-[protein] + 3 S-adenosyl-L-homocysteine + 3 H(+). The catalysed reaction is N-terminal L-seryl-L-prolyl-L-lysyl-[protein] + 3 S-adenosyl-L-methionine = N-terminal N,N,N-trimethyl-L-seryl-L-prolyl-L-lysyl-[protein] + 3 S-adenosyl-L-homocysteine + 3 H(+). It carries out the reaction N-terminal L-prolyl-L-prolyl-L-lysyl-[protein] + 2 S-adenosyl-L-methionine = N-terminal N,N-dimethyl-L-prolyl-L-prolyl-L-lysyl-[protein] + 2 S-adenosyl-L-homocysteine + 2 H(+). Functionally, alpha-N-methyltransferase that methylates the N-terminus of target proteins containing the N-terminal motif [Ala/Pro/Ser]-Pro-Lys when the initiator Met is cleaved. Specifically catalyzes mono-, di- or tri-methylation of exposed alpha-amino group of Ala or Ser residue in the [Ala/Ser]-Pro-Lys motif and mono- or di-methylation of Pro in the Pro-Pro-Lys motif. The chain is Alpha N-terminal protein methyltransferase 1 from Oryza sativa subsp. indica (Rice).